The chain runs to 239 residues: Uridylate kinase (239 aa).

13-16 (KISG) contributes to the ATP binding site. Residue Gly-55 participates in UMP binding. ATP is bound by residues Gly-56 and Arg-60. UMP contacts are provided by residues Asp-75 and 136–143 (LGIPFFTT). The ATP site is built by Thr-163, Tyr-169, and Asp-172.

This sequence belongs to the UMP kinase family. In terms of assembly, homohexamer.

The protein localises to the cytoplasm. It catalyses the reaction UMP + ATP = UDP + ADP. It participates in pyrimidine metabolism; CTP biosynthesis via de novo pathway; UDP from UMP (UMPK route): step 1/1. Its activity is regulated as follows. Inhibited by UTP. In terms of biological role, catalyzes the reversible phosphorylation of UMP to UDP. The polypeptide is Uridylate kinase (Buchnera aphidicola subsp. Cinara cedri (strain Cc)).